Here is a 191-residue protein sequence, read N- to C-terminus: Fe/S biogenesis protein NfuA (191 aa).

Residues Cys149 and Cys152 each contribute to the [4Fe-4S] cluster site.

The protein belongs to the NfuA family. As to quaternary structure, homodimer. The cofactor is [4Fe-4S] cluster.

Functionally, involved in iron-sulfur cluster biogenesis. Binds a 4Fe-4S cluster, can transfer this cluster to apoproteins, and thereby intervenes in the maturation of Fe/S proteins. Could also act as a scaffold/chaperone for damaged Fe/S proteins. The polypeptide is Fe/S biogenesis protein NfuA (Cronobacter sakazakii (strain ATCC BAA-894) (Enterobacter sakazakii)).